A 356-amino-acid chain; its full sequence is Isopentenyl-diphosphate delta-isomerase (356 aa).

8–9 contributes to the substrate binding site; the sequence is RK. Residues 66–68, Ser-96, and Asn-124 contribute to the FMN site; that span reads AIT. 96–98 serves as a coordination point for substrate; the sequence is SQR. Position 160 (Gln-160) interacts with substrate. Glu-161 is a binding site for Mg(2+). FMN-binding positions include Lys-201, Thr-231, 280 to 282, and 301 to 302; these read GIR and AL.

Belongs to the IPP isomerase type 2 family. As to quaternary structure, homooctamer. Dimer of tetramers. It depends on FMN as a cofactor. NADPH serves as cofactor. Requires Mg(2+) as cofactor.

The protein localises to the cytoplasm. It carries out the reaction isopentenyl diphosphate = dimethylallyl diphosphate. Functionally, involved in the biosynthesis of isoprenoids. Catalyzes the 1,3-allylic rearrangement of the homoallylic substrate isopentenyl (IPP) to its allylic isomer, dimethylallyl diphosphate (DMAPP). This Methanococcus aeolicus (strain ATCC BAA-1280 / DSM 17508 / OCM 812 / Nankai-3) protein is Isopentenyl-diphosphate delta-isomerase.